Here is a 766-residue protein sequence, read N- to C-terminus: Lanosterol synthase ERG7 (766 aa).

The disordered stretch occupies residues 1-47 (MVANSTGRDASALKSRKRAADSESEPLLKQGQPFPKQPRIGSELDKT). Residues 148–190 (ATAIYNYISARAHPEDGGWGLHIEGESSVFGTLMNYVALRLVG) form a PFTB 1 repeat. Aspartate 482 functions as the Proton donor in the catalytic mechanism. PFTB repeat units follow at residues 586–626 (IRTA…KHIG) and 635–676 (SRRG…VVQT).

The protein belongs to the terpene cyclase/mutase family.

It localises to the lipid droplet. It is found in the endoplasmic reticulum membrane. The catalysed reaction is (S)-2,3-epoxysqualene = lanosterol. It participates in terpene metabolism; lanosterol biosynthesis; lanosterol from farnesyl diphosphate: step 3/3. Its pathway is steroid metabolism; ergosterol biosynthesis. Functionally, lanosterol synthase; part of the third module of ergosterol biosynthesis pathway that includes the late steps of the pathway. ERG7 catalyzes the cyclization of (S)-2,3 oxidosqualene to lanosterol, a reaction that forms the sterol core. The third module or late pathway involves the ergosterol synthesis itself through consecutive reactions that mainly occur in the endoplasmic reticulum (ER) membrane. Firstly, the squalene synthase ERG9 catalyzes the condensation of 2 farnesyl pyrophosphate moieties to form squalene, which is the precursor of all steroids. Squalene synthase is crucial for balancing the incorporation of farnesyl diphosphate (FPP) into sterol and nonsterol isoprene synthesis. Secondly, squalene is converted into lanosterol by the consecutive action of the squalene epoxidase ERG1 and the lanosterol synthase ERG7. Then, the delta(24)-sterol C-methyltransferase ERG6 methylates lanosterol at C-24 to produce eburicol. Eburicol is the substrate of the sterol 14-alpha demethylase encoded by CYP51A, CYP51B and CYP51C, to yield 4,4,24-trimethyl ergosta-8,14,24(28)-trienol. CYP51B encodes the enzyme primarily responsible for sterol 14-alpha-demethylation, and plays an essential role in ascospore formation. CYP51A encodes an additional sterol 14-alpha-demethylase, induced on ergosterol depletion and responsible for the intrinsic variation in azole sensitivity. The third CYP51 isoform, CYP51C, does not encode a sterol 14-alpha-demethylase, but is required for full virulence on host wheat ears. The C-14 reductase ERG24 then reduces the C14=C15 double bond which leads to 4,4-dimethylfecosterol. A sequence of further demethylations at C-4, involving the C-4 demethylation complex containing the C-4 methylsterol oxidases ERG25, the sterol-4-alpha-carboxylate 3-dehydrogenase ERG26 and the 3-keto-steroid reductase ERG27, leads to the production of fecosterol via 4-methylfecosterol. ERG28 has a role as a scaffold to help anchor ERG25, ERG26 and ERG27 to the endoplasmic reticulum. The C-8 sterol isomerase ERG2 then catalyzes the reaction which results in unsaturation at C-7 in the B ring of sterols and thus converts fecosterol to episterol. The sterol-C5-desaturases ERG3A and ERG3BB then catalyze the introduction of a C-5 double bond in the B ring to produce 5-dehydroepisterol. The C-22 sterol desaturases ERG5A and ERG5B further convert 5-dehydroepisterol into ergosta-5,7,22,24(28)-tetraen-3beta-ol by forming the C-22(23) double bond in the sterol side chain. Finally, ergosta-5,7,22,24(28)-tetraen-3beta-ol is substrate of the C-24(28) sterol reductase ERG4 to produce ergosterol. This Gibberella zeae (strain ATCC MYA-4620 / CBS 123657 / FGSC 9075 / NRRL 31084 / PH-1) (Wheat head blight fungus) protein is Lanosterol synthase ERG7.